The chain runs to 245 residues: tRNA (guanine-N(1)-)-methyltransferase (245 aa).

S-adenosyl-L-methionine is bound by residues glycine 111 and 131 to 136 (MGDYVL).

It belongs to the RNA methyltransferase TrmD family. Homodimer.

The protein resides in the cytoplasm. It catalyses the reaction guanosine(37) in tRNA + S-adenosyl-L-methionine = N(1)-methylguanosine(37) in tRNA + S-adenosyl-L-homocysteine + H(+). Specifically methylates guanosine-37 in various tRNAs. The polypeptide is tRNA (guanine-N(1)-)-methyltransferase (Staphylococcus epidermidis (strain ATCC 35984 / DSM 28319 / BCRC 17069 / CCUG 31568 / BM 3577 / RP62A)).